Consider the following 373-residue polypeptide: Pectin lyase D (373 aa).

Positions 1 to 19 (MKYAAALTAIAALAARAAA) are cleaved as a signal peptide. Intrachain disulfides connect Cys82–Cys101 and Cys91–Cys225. A glycan (N-linked (GlcNAc...) asparagine) is linked at Asn128. Residue Arg255 is part of the active site. N-linked (GlcNAc...) asparagine glycosylation is present at Asn274. Cys321 and Cys329 form a disulfide bridge. An N-linked (GlcNAc...) asparagine glycan is attached at Asn348. A compositionally biased stretch (low complexity) spans 354-366 (LPSADAASTSPAS). Positions 354–373 (LPSADAASTSPASNAGQGNL) are disordered.

Belongs to the polysaccharide lyase 1 family. Post-translationally, may be O-glycosylated; does not contain N-acetylglucosamine.

The protein resides in the secreted. It carries out the reaction Eliminative cleavage of (1-&gt;4)-alpha-D-galacturonan methyl ester to give oligosaccharides with 4-deoxy-6-O-methyl-alpha-D-galact-4-enuronosyl groups at their non-reducing ends.. In terms of biological role, pectinolytic enzymes consist of four classes of enzymes: pectin lyase, polygalacturonase, pectin methylesterase and rhamnogalacturonase. Among pectinolytic enzymes, pectin lyase is the most important in depolymerization of pectin, since it cleaves internal glycosidic bonds of highly methylated pectins. The sequence is that of Pectin lyase D (pelD) from Aspergillus niger.